We begin with the raw amino-acid sequence, 133 residues long: MTLNLCVLTPNRIVWDSEVKEIILSTNSGQIGVLPNHAPIATAVDIGILRIRLNDQWLTMALMGGFARIGNNEITVLVNDAEKSSDIDPQEAQQTLEIAEAALRKAEGKRQTIEANLALRRARTRVEAINAIS.

The protein belongs to the ATPase epsilon chain family. F-type ATPases have 2 components, CF(1) - the catalytic core - and CF(0) - the membrane proton channel. CF(1) has five subunits: alpha(3), beta(3), gamma(1), delta(1), epsilon(1). CF(0) has three main subunits: a, b and c.

Its subcellular location is the plastid. The protein resides in the chloroplast thylakoid membrane. Its function is as follows. Produces ATP from ADP in the presence of a proton gradient across the membrane. This is ATP synthase epsilon chain, chloroplastic from Helianthus annuus (Common sunflower).